Here is a 213-residue protein sequence, read N- to C-terminus: Thymidylate kinase (213 aa).

ATP is bound at residue 10–17 (GLEGAGKT).

The protein belongs to the thymidylate kinase family.

The catalysed reaction is dTMP + ATP = dTDP + ADP. Functionally, phosphorylation of dTMP to form dTDP in both de novo and salvage pathways of dTTP synthesis. This Klebsiella pneumoniae subsp. pneumoniae (strain ATCC 700721 / MGH 78578) protein is Thymidylate kinase.